Consider the following 353-residue polypeptide: Photosystem II D2 protein (353 aa).

An N-acetylthreonine modification is found at Thr-2. Phosphothreonine is present on Thr-2. The chain crosses the membrane as a helical span at residues 41 to 61; that stretch reads CAYFALGGWLTGTTFVTSWYT. His-118 provides a ligand contact to chlorophyll a. The chain crosses the membrane as a helical span at residues 125–141; that stretch reads GFMLRQFEIARSVGLRP. Pheophytin a contacts are provided by Gln-130 and Asn-143. A helical transmembrane segment spans residues 153–166; it reads VFVSVFLIYPLGQS. His-198 lines the chlorophyll a pocket. The chain crosses the membrane as a helical span at residues 208 to 228; sequence AALLCAIHGATVENTIFEDGD. A plastoquinone is bound by residues His-215 and Phe-262. Residue His-215 participates in Fe cation binding. A Fe cation-binding site is contributed by His-269. A helical membrane pass occupies residues 279–295; sequence GLWMSAIGVVGLALNLR.

The protein belongs to the reaction center PufL/M/PsbA/D family. As to quaternary structure, PSII is composed of 1 copy each of membrane proteins PsbA, PsbB, PsbC, PsbD, PsbE, PsbF, PsbH, PsbI, PsbJ, PsbK, PsbL, PsbM, PsbT, PsbX, PsbY, PsbZ, Psb30/Ycf12, at least 3 peripheral proteins of the oxygen-evolving complex and a large number of cofactors. It forms dimeric complexes. The cofactor is The D1/D2 heterodimer binds P680, chlorophylls that are the primary electron donor of PSII, and subsequent electron acceptors. It shares a non-heme iron and each subunit binds pheophytin, quinone, additional chlorophylls, carotenoids and lipids. There is also a Cl(-1) ion associated with D1 and D2, which is required for oxygen evolution. The PSII complex binds additional chlorophylls, carotenoids and specific lipids..

The protein localises to the plastid. The protein resides in the chloroplast thylakoid membrane. It catalyses the reaction 2 a plastoquinone + 4 hnu + 2 H2O = 2 a plastoquinol + O2. In terms of biological role, photosystem II (PSII) is a light-driven water:plastoquinone oxidoreductase that uses light energy to abstract electrons from H(2)O, generating O(2) and a proton gradient subsequently used for ATP formation. It consists of a core antenna complex that captures photons, and an electron transfer chain that converts photonic excitation into a charge separation. The D1/D2 (PsbA/PsbD) reaction center heterodimer binds P680, the primary electron donor of PSII as well as several subsequent electron acceptors. D2 is needed for assembly of a stable PSII complex. The sequence is that of Photosystem II D2 protein from Staurastrum punctulatum (Green alga).